A 467-amino-acid chain; its full sequence is Putative alpha-amylase (467 aa).

Residue Glu-145 is the Nucleophile of the active site.

The protein belongs to the glycosyl hydrolase 57 family.

It carries out the reaction Endohydrolysis of (1-&gt;4)-alpha-D-glucosidic linkages in polysaccharides containing three or more (1-&gt;4)-alpha-linked D-glucose units.. The polypeptide is Putative alpha-amylase (Methanocaldococcus jannaschii (strain ATCC 43067 / DSM 2661 / JAL-1 / JCM 10045 / NBRC 100440) (Methanococcus jannaschii)).